The chain runs to 375 residues: Putative type I specificity subunit S.MpnORF638P (375 aa).

Belongs to the type-I restriction system S methylase family. As to quaternary structure, the methyltransferase is composed of M and S polypeptides.

The specificity (S) subunit of a type I methyltransferase (MTase); this subunit dictates DNA sequence specificity. The single R subunit has multiple frameshifts and is probably not expressed. The polypeptide is Putative type I specificity subunit S.MpnORF638P (Mycoplasma pneumoniae (strain ATCC 29342 / M129 / Subtype 1) (Mycoplasmoides pneumoniae)).